The following is a 338-amino-acid chain: UDP-N-acetylenolpyruvoylglucosamine reductase (338 aa).

Residues Ile17 to Arg188 form the FAD-binding PCMH-type domain. Arg164 is an active-site residue. Ser237 acts as the Proton donor in catalysis. Glu333 is a catalytic residue.

Belongs to the MurB family. FAD serves as cofactor.

Its subcellular location is the cytoplasm. It catalyses the reaction UDP-N-acetyl-alpha-D-muramate + NADP(+) = UDP-N-acetyl-3-O-(1-carboxyvinyl)-alpha-D-glucosamine + NADPH + H(+). It functions in the pathway cell wall biogenesis; peptidoglycan biosynthesis. Cell wall formation. In Porphyromonas gingivalis (strain ATCC 33277 / DSM 20709 / CIP 103683 / JCM 12257 / NCTC 11834 / 2561), this protein is UDP-N-acetylenolpyruvoylglucosamine reductase.